The sequence spans 155 residues: uncharacterized protein (155 aa).

The region spanning 4–65 (IDEVDEIILR…IIDHSFLGEF (62 aa)) is the HTH asnC-type domain. Positions 23–42 (LTELSRKVGLTPAAIKNRVE) form a DNA-binding region, H-T-H motif.

This is an uncharacterized protein from Pyrococcus furiosus (strain ATCC 43587 / DSM 3638 / JCM 8422 / Vc1).